The chain runs to 451 residues: CBL-interacting protein kinase 22 (451 aa).

Residues 26-301 (YELGRVLGQG…IGEIFDHPWL (276 aa)) enclose the Protein kinase domain. Residues 32-40 (LGQGASSKV) and Lys55 each bind ATP. Residue Asp165 is the Proton acceptor of the active site. Positions 183 to 216 (DFGLSAFADADQHLGATDGLAATHCGSPAYVAPE) are activation loop. An NAF domain is found at 330–356 (ELEQAMELNAFDIIGFASGCDLSGLIG). The segment at 361–389 (RVRFVLPGGDSKSVLDKVEKLGREEGLVV) is PPI.

It belongs to the protein kinase superfamily. CAMK Ser/Thr protein kinase family. SNF1 subfamily. It depends on Mn(2+) as a cofactor.

The enzyme catalyses L-seryl-[protein] + ATP = O-phospho-L-seryl-[protein] + ADP + H(+). The catalysed reaction is L-threonyl-[protein] + ATP = O-phospho-L-threonyl-[protein] + ADP + H(+). In terms of biological role, CIPK serine-threonine protein kinases interact with CBL proteins. Binding of a CBL protein to the regulatory NAF domain of CIPK protein lead to the activation of the kinase in a calcium-dependent manner. The chain is CBL-interacting protein kinase 22 (CIPK22) from Oryza sativa subsp. japonica (Rice).